A 342-amino-acid polypeptide reads, in one-letter code: Phosphate acyltransferase (342 aa).

Belongs to the PlsX family. Homodimer. Probably interacts with PlsY.

The protein resides in the cytoplasm. The catalysed reaction is a fatty acyl-[ACP] + phosphate = an acyl phosphate + holo-[ACP]. It functions in the pathway lipid metabolism; phospholipid metabolism. Catalyzes the reversible formation of acyl-phosphate (acyl-PO(4)) from acyl-[acyl-carrier-protein] (acyl-ACP). This enzyme utilizes acyl-ACP as fatty acyl donor, but not acyl-CoA. The chain is Phosphate acyltransferase from Alkalilimnicola ehrlichii (strain ATCC BAA-1101 / DSM 17681 / MLHE-1).